The primary structure comprises 185 residues: Ribosome-recycling factor (185 aa).

The span at Ile-142–Thr-164 shows a compositional bias: basic and acidic residues. The interval Ile-142–Asp-173 is disordered.

This sequence belongs to the RRF family.

Its subcellular location is the cytoplasm. Its function is as follows. Responsible for the release of ribosomes from messenger RNA at the termination of protein biosynthesis. May increase the efficiency of translation by recycling ribosomes from one round of translation to another. The polypeptide is Ribosome-recycling factor (Mycolicibacterium gilvum (strain PYR-GCK) (Mycobacterium gilvum (strain PYR-GCK))).